The sequence spans 92 residues: Small ribosomal subunit protein uS19c (92 aa).

It belongs to the universal ribosomal protein uS19 family.

The protein localises to the plastid. It is found in the chloroplast. Protein S19 forms a complex with S13 that binds strongly to the 16S ribosomal RNA. The polypeptide is Small ribosomal subunit protein uS19c (Nephroselmis olivacea (Green alga)).